Here is a 268-residue protein sequence, read N- to C-terminus: MERYQQLFKQLAAKNEGAFVPFVQLGDPTPALSLEIIDTLIAAGADALELGIPFSDPLADGPTIQNAALRAFAAGVTPGICFEMLAEIRKKHPTIPIGLLMYANLVFHNGIDTFYQRCADVGVDSVLIADVPFEESLPFRTAALRHGIAPIFICPPNADDDLLREIASHGRGYTYLLSRAGVTGAENHGQLPLNHLIDKLCEYNAAPALQGFGISEPEQVKISLAAGAAGAISGSAIVKIIENNVSQPAEMLAQLANFVTNMKAATRS.

Residues E49 and D60 each act as proton acceptor in the active site.

The protein belongs to the TrpA family. In terms of assembly, tetramer of two alpha and two beta chains.

It catalyses the reaction (1S,2R)-1-C-(indol-3-yl)glycerol 3-phosphate + L-serine = D-glyceraldehyde 3-phosphate + L-tryptophan + H2O. The protein operates within amino-acid biosynthesis; L-tryptophan biosynthesis; L-tryptophan from chorismate: step 5/5. Its function is as follows. The alpha subunit is responsible for the aldol cleavage of indoleglycerol phosphate to indole and glyceraldehyde 3-phosphate. This is Tryptophan synthase alpha chain from Yersinia enterocolitica serotype O:8 / biotype 1B (strain NCTC 13174 / 8081).